A 454-amino-acid polypeptide reads, in one-letter code: Bifunctional protein GlmU (454 aa).

The segment at 1–233 (MTNRTCLAVI…RESAVGINNR (233 aa)) is pyrophosphorylase. Residues 11–14 (LAAG), Lys25, Gln79, and 84–85 (GT) each bind UDP-N-acetyl-alpha-D-glucosamine. Asp109 contacts Mg(2+). Positions 145, 159, 174, and 231 each coordinate UDP-N-acetyl-alpha-D-glucosamine. Asn231 contributes to the Mg(2+) binding site. The interval 234-254 (AELAEAEAVWQQKRRRELMLS) is linker. The interval 255-454 (GVTLIAPETV…AEEKAKKSGG (200 aa)) is N-acetyltransferase. Arg320 and Lys338 together coordinate UDP-N-acetyl-alpha-D-glucosamine. The Proton acceptor role is filled by His350. Tyr353 and Asn364 together coordinate UDP-N-acetyl-alpha-D-glucosamine. Residues Ala367, 373-374 (NY), Ser410, and Arg427 contribute to the acetyl-CoA site.

In the N-terminal section; belongs to the N-acetylglucosamine-1-phosphate uridyltransferase family. The protein in the C-terminal section; belongs to the transferase hexapeptide repeat family. As to quaternary structure, homotrimer. Mg(2+) is required as a cofactor.

It localises to the cytoplasm. It carries out the reaction alpha-D-glucosamine 1-phosphate + acetyl-CoA = N-acetyl-alpha-D-glucosamine 1-phosphate + CoA + H(+). It catalyses the reaction N-acetyl-alpha-D-glucosamine 1-phosphate + UTP + H(+) = UDP-N-acetyl-alpha-D-glucosamine + diphosphate. It participates in nucleotide-sugar biosynthesis; UDP-N-acetyl-alpha-D-glucosamine biosynthesis; N-acetyl-alpha-D-glucosamine 1-phosphate from alpha-D-glucosamine 6-phosphate (route II): step 2/2. Its pathway is nucleotide-sugar biosynthesis; UDP-N-acetyl-alpha-D-glucosamine biosynthesis; UDP-N-acetyl-alpha-D-glucosamine from N-acetyl-alpha-D-glucosamine 1-phosphate: step 1/1. It functions in the pathway bacterial outer membrane biogenesis; LPS lipid A biosynthesis. Functionally, catalyzes the last two sequential reactions in the de novo biosynthetic pathway for UDP-N-acetylglucosamine (UDP-GlcNAc). The C-terminal domain catalyzes the transfer of acetyl group from acetyl coenzyme A to glucosamine-1-phosphate (GlcN-1-P) to produce N-acetylglucosamine-1-phosphate (GlcNAc-1-P), which is converted into UDP-GlcNAc by the transfer of uridine 5-monophosphate (from uridine 5-triphosphate), a reaction catalyzed by the N-terminal domain. This is Bifunctional protein GlmU from Chelativorans sp. (strain BNC1).